Reading from the N-terminus, the 362-residue chain is 5'-tyrosyl-DNA phosphodiesterase (362 aa).

Positions 1–10 are enriched in acidic residues; that stretch reads MSNSDDEIQE. The disordered stretch occupies residues 1 to 43; the sequence is MSNSDDEIQEIEAKRQKMSQEDSEVEIEILDEPEQGKLKNSSM. The segment covering 11–20 has biased composition (basic and acidic residues); it reads IEAKRQKMSQ. The segment covering 21 to 33 has biased composition (acidic residues); sequence EDSEVEIEILDEP. The segment at 126 to 130 is interaction with 5' end of substrate DNA; that stretch reads NIDGL. The Mg(2+) site is built by aspartate 128 and glutamate 158. Positions 232 to 237 are interaction with 5' end of substrate DNA; it reads HLESTR. The Proton donor/acceptor role is filled by aspartate 271. Residues 273–275 form an interaction with 5' end of substrate DNA region; it reads NLR.

Belongs to the CCR4/nocturin family. TTRAP/TDP2 subfamily. Interacts with mxl-1; the interaction promotes axon regeneration after injury. Interacts with ets-4; the interaction is required for the sumoylation of ets-4. Requires Mg(2+) as cofactor. Mn(2+) serves as cofactor.

Its subcellular location is the nucleus. It localises to the PML body. In terms of biological role, DNA repair enzyme that can remove a variety of covalent adducts from DNA through hydrolysis of a 5'-phosphodiester bond, giving rise to DNA with a free 5' phosphate. Catalyzes the hydrolysis of dead-end complexes between DNA and the topoisomerase 2 (top2) active site tyrosine residue. Hydrolyzes 5'-phosphoglycolates on protruding 5' ends on DNA double-strand breaks (DSBs) due to DNA damage by radiation and free radicals. Inhibits axon regeneration after neuronal injury by promoting the sumoylation of ets-4, thereby inhibiting the phosphorylation of ets-4 required for probable interaction with cebp-1 and activation of svh-2 expression. The protein is 5'-tyrosyl-DNA phosphodiesterase of Caenorhabditis elegans.